We begin with the raw amino-acid sequence, 433 residues long: O-methyltransferase aclM (433 aa).

Positions 5–37 (LTDAERTALQTSLEALNRQVEATRNILRSNSQK) form a coiled coil. Residues Asp277 and 311-313 (GDF) contribute to the S-adenosyl-L-methionine site. Catalysis depends on His330, which acts as the Proton acceptor.

This sequence belongs to the class I-like SAM-binding methyltransferase superfamily. Cation-independent O-methyltransferase family. COMT subfamily.

It functions in the pathway mycotoxin biosynthesis. Functionally, O-methyltransferase; part of the gene cluster that mediates the biosynthesis of aspirochlorine (or antibiotic A30641), an unusual halogenated spiro compound with distinctive antifungal properties due to selective inhibition of protein biosynthesis, and which is also active against bacteria, viruses, and murine tumor cells. The non-ribosomal peptide synthetase (NRPS) aclP is responsible the formation of the diketopiperazine (DKP) core from the condensation of 2 phenylalanine residues. One Phe residue is tailored into chlorotyrosine by hydroxylation and chlorination, whereas the second Phe undergoes an unprecedented C-C bond cleavage to be converted into glycine. After formation of the DKP, sulfur is incorporated into the DKP by conjugation with glutathione by aclG, followed by its stepwise degradation to the thiol by aclI, aclJ and aclK, and the dithiol oxidation by aclT. In addition, oxygenases (aclB, aclC, aclL and aclO) and O-methyltransferases (aclM and aclU) act as tailoring enzymes to produce the intermediate dechloroaspirochlorine. Ultimately, chlorination of dechloroaspirochlorine by the halogenase aclH is the last step in the aspirochlorine pathway. The protein is O-methyltransferase aclM of Aspergillus oryzae (strain ATCC 42149 / RIB 40) (Yellow koji mold).